Here is a 103-residue protein sequence, read N- to C-terminus: UPF0298 protein LACR_0404 (103 aa).

The protein belongs to the UPF0298 family.

The protein localises to the cytoplasm. The chain is UPF0298 protein LACR_0404 from Lactococcus lactis subsp. cremoris (strain SK11).